The following is a 232-amino-acid chain: Exosome complex component RRP40 (232 aa).

The protein belongs to the RRP40 family. Component of the RNA exosome complex. Specifically part of the catalytically inactive RNA exosome core complex.

Its subcellular location is the cytoplasm. It localises to the nucleus. It is found in the nucleolus. Functionally, non-catalytic component of the RNA exosome complex which has 3'-&gt;5' exoribonuclease activity and participates in a multitude of cellular RNA processing and degradation events. In the nucleus, the RNA exosome complex is involved in proper maturation of stable RNA species such as rRNA, snRNA and snoRNA, in the elimination of RNA processing by-products and non-coding 'pervasive' transcripts such as antisense RNA species, and of mRNAs with processing defects, thereby limiting or excluding their export to the cytoplasm. In the cytoplasm, the RNA exosome complex is involved in general mRNA turnover and specifically degrades inherently unstable mRNAs containing AU-rich elements (AREs) within their 3' untranslated regions, and in RNA surveillance pathways, preventing translation of aberrant mRNAs. The catalytic inactive RNA exosome core complex of 9 subunits is proposed to play a pivotal role in the binding and presentation of RNA for ribonucleolysis, and to serve as a scaffold for the association with catalytic subunits and accessory proteins or complexes. Required generally for normal embryonic and neuronal development. Also plays a critical role in the maintenance of neuronal function in mature flies by controlling the levels of specific mRNAs such as the synaptic regulator Arc1. The sequence is that of Exosome complex component RRP40 from Drosophila melanogaster (Fruit fly).